A 462-amino-acid polypeptide reads, in one-letter code: Argininosuccinate lyase (462 aa).

It belongs to the lyase 1 family. Argininosuccinate lyase subfamily.

The protein resides in the cytoplasm. The enzyme catalyses 2-(N(omega)-L-arginino)succinate = fumarate + L-arginine. It functions in the pathway amino-acid biosynthesis; L-arginine biosynthesis; L-arginine from L-ornithine and carbamoyl phosphate: step 3/3. The sequence is that of Argininosuccinate lyase from Methylobacterium sp. (strain 4-46).